The sequence spans 361 residues: Nicotinate-nucleotide--dimethylbenzimidazole phosphoribosyltransferase (361 aa).

Glu-315 acts as the Proton acceptor in catalysis.

It belongs to the CobT family.

It carries out the reaction 5,6-dimethylbenzimidazole + nicotinate beta-D-ribonucleotide = alpha-ribazole 5'-phosphate + nicotinate + H(+). It participates in nucleoside biosynthesis; alpha-ribazole biosynthesis; alpha-ribazole from 5,6-dimethylbenzimidazole: step 1/2. Catalyzes the synthesis of alpha-ribazole-5'-phosphate from nicotinate mononucleotide (NAMN) and 5,6-dimethylbenzimidazole (DMB). The sequence is that of Nicotinate-nucleotide--dimethylbenzimidazole phosphoribosyltransferase from Clostridium perfringens (strain 13 / Type A).